The chain runs to 354 residues: Putative F-box/kelch-repeat protein At5g03000 (354 aa).

Residues 37–86 (PTVFSSLPDELILNCLARVSRFYRPSLSLVNKEFQSLIASPDLEATRSRI) enclose the F-box domain. 2 Kelch repeats span residues 143 to 189 (EIYI…VIDG) and 190 to 236 (KIYV…FPGK).

This Arabidopsis thaliana (Mouse-ear cress) protein is Putative F-box/kelch-repeat protein At5g03000.